The primary structure comprises 158 residues: Transcriptional regulator MraZ (158 aa).

SpoVT-AbrB domains follow at residues 7–54 (NIEA…PEEV) and 84–127 (VEII…AKER).

Belongs to the MraZ family. As to quaternary structure, forms oligomers.

Its subcellular location is the cytoplasm. It is found in the nucleoid. The sequence is that of Transcriptional regulator MraZ from Bacteroides fragilis (strain ATCC 25285 / DSM 2151 / CCUG 4856 / JCM 11019 / LMG 10263 / NCTC 9343 / Onslow / VPI 2553 / EN-2).